Consider the following 432-residue polypeptide: Trigger factor (432 aa).

In terms of domain architecture, PPIase FKBP-type spans 161–246 (EDRVVIDFVG…LKKVEVMVLP (86 aa)).

It belongs to the FKBP-type PPIase family. Tig subfamily.

Its subcellular location is the cytoplasm. The enzyme catalyses [protein]-peptidylproline (omega=180) = [protein]-peptidylproline (omega=0). In terms of biological role, involved in protein export. Acts as a chaperone by maintaining the newly synthesized protein in an open conformation. Functions as a peptidyl-prolyl cis-trans isomerase. This is Trigger factor (tig) from Pasteurella multocida (strain Pm70).